The chain runs to 258 residues: Tryptophan synthase alpha chain (258 aa).

Active-site proton acceptor residues include Glu-52 and Asp-63.

Belongs to the TrpA family. Tetramer of two alpha and two beta chains.

It carries out the reaction (1S,2R)-1-C-(indol-3-yl)glycerol 3-phosphate + L-serine = D-glyceraldehyde 3-phosphate + L-tryptophan + H2O. The protein operates within amino-acid biosynthesis; L-tryptophan biosynthesis; L-tryptophan from chorismate: step 5/5. The alpha subunit is responsible for the aldol cleavage of indoleglycerol phosphate to indole and glyceraldehyde 3-phosphate. In Streptococcus pneumoniae (strain Taiwan19F-14), this protein is Tryptophan synthase alpha chain.